We begin with the raw amino-acid sequence, 226 residues long: ATP synthase F(0) complex subunit a (226 aa).

A run of 5 helical transmembrane segments spans residues 9-29 (FITPMMLGLPLVTLIILFPSL), 68-88 (WTLMLMSLILFIGSTNLLGLL), 97-117 (QLSMNLGMAIPLWAGAVITGF), 138-158 (IPMLVIIETISLFIQPMALAV), and 184-204 (ISPTTALITFIILILLTILEF).

It belongs to the ATPase A chain family. As to quaternary structure, component of the ATP synthase complex composed at least of ATP5F1A/subunit alpha, ATP5F1B/subunit beta, ATP5MC1/subunit c (homooctomer), MT-ATP6/subunit a, MT-ATP8/subunit 8, ATP5ME/subunit e, ATP5MF/subunit f, ATP5MG/subunit g, ATP5MK/subunit k, ATP5MJ/subunit j, ATP5F1C/subunit gamma, ATP5F1D/subunit delta, ATP5F1E/subunit epsilon, ATP5PF/subunit F6, ATP5PB/subunit b, ATP5PD/subunit d, ATP5PO/subunit OSCP. ATP synthase complex consists of a soluble F(1) head domain (subunits alpha(3) and beta(3)) - the catalytic core - and a membrane F(0) domain - the membrane proton channel (subunits c, a, 8, e, f, g, k and j). These two domains are linked by a central stalk (subunits gamma, delta, and epsilon) rotating inside the F1 region and a stationary peripheral stalk (subunits F6, b, d, and OSCP). Interacts with DNAJC30; interaction is direct.

The protein localises to the mitochondrion inner membrane. It catalyses the reaction H(+)(in) = H(+)(out). Subunit a, of the mitochondrial membrane ATP synthase complex (F(1)F(0) ATP synthase or Complex V) that produces ATP from ADP in the presence of a proton gradient across the membrane which is generated by electron transport complexes of the respiratory chain. ATP synthase complex consist of a soluble F(1) head domain - the catalytic core - and a membrane F(1) domain - the membrane proton channel. These two domains are linked by a central stalk rotating inside the F(1) region and a stationary peripheral stalk. During catalysis, ATP synthesis in the catalytic domain of F(1) is coupled via a rotary mechanism of the central stalk subunits to proton translocation. With the subunit c (ATP5MC1), forms the proton-conducting channel in the F(0) domain, that contains two crucial half-channels (inlet and outlet) that facilitate proton movement from the mitochondrial intermembrane space (IMS) into the matrix. Protons are taken up via the inlet half-channel and released through the outlet half-channel, following a Grotthuss mechanism. The polypeptide is ATP synthase F(0) complex subunit a (Capra hircus (Goat)).